A 338-amino-acid chain; its full sequence is Lipoate-protein ligase A (338 aa).

Residues 29–216 (PATQRVLFLW…AFFAHYGERV (188 aa)) enclose the BPL/LPL catalytic domain. ATP contacts are provided by residues R71, 76-79 (GAVF), and K134. K134 is a (R)-lipoate binding site.

Belongs to the LplA family. In terms of assembly, monomer.

Its subcellular location is the cytoplasm. It carries out the reaction L-lysyl-[lipoyl-carrier protein] + (R)-lipoate + ATP = N(6)-[(R)-lipoyl]-L-lysyl-[lipoyl-carrier protein] + AMP + diphosphate + H(+). Its pathway is protein modification; protein lipoylation via exogenous pathway; protein N(6)-(lipoyl)lysine from lipoate: step 1/2. It functions in the pathway protein modification; protein lipoylation via exogenous pathway; protein N(6)-(lipoyl)lysine from lipoate: step 2/2. Catalyzes both the ATP-dependent activation of exogenously supplied lipoate to lipoyl-AMP and the transfer of the activated lipoyl onto the lipoyl domains of lipoate-dependent enzymes. This is Lipoate-protein ligase A from Shigella boydii serotype 18 (strain CDC 3083-94 / BS512).